Here is a 686-residue protein sequence, read N- to C-terminus: Disintegrin and metalloproteinase domain-containing protein 17 homolog (686 aa).

Residues 1–21 (MKIQDRSLLIFLVLGILKSDA) form the signal peptide. The propeptide occupies 22–177 (FNTRVKRHAP…RRAIAIPSDR (156 aa)). 3 N-linked (GlcNAc...) asparagine glycosylation sites follow: Asn-59, Asn-206, and Asn-262. Over 178-637 (RKDVLNVKRN…TGGVLEFIKT (460 aa)) the chain is Extracellular. The region spanning 187 to 445 (NRCTLKLVAD…KWESCFQEEM (259 aa)) is the Peptidase M12B domain. 2 cysteine pairs are disulfide-bonded: Cys-328–Cys-440 and Cys-394–Cys-424. A Zn(2+)-binding site is contributed by His-370. Residue Glu-371 is part of the active site. Zn(2+)-binding residues include His-374 and His-380. Residues 446 to 535 (TSFCGNGIVE…ECPSAPPVRD (90 aa)) form the Disintegrin domain. N-linked (GlcNAc...) asparagine glycosylation is present at Asn-501. An intrachain disulfide couples Cys-506 to Cys-527. Asn-581 carries N-linked (GlcNAc...) asparagine glycosylation. A helical membrane pass occupies residues 638–658 (HIVVIAIIFFTLIFVGIYKIV). The Cytoplasmic segment spans residues 659–686 (KYGENFTEKVTHKTAGGCRSVFVKADVN).

The cofactor is Zn(2+).

It localises to the cell membrane. In terms of biological role, metalloprotease. Acts together with protease sup-17 to facilitate lin-12/Notch signaling during developmental cell fate decision, including anchor cell/ventral uterine precursor cell decision. By modulating glp-1/Notch signaling, plays a role in germline development. In Caenorhabditis elegans, this protein is Disintegrin and metalloproteinase domain-containing protein 17 homolog.